Consider the following 340-residue polypeptide: MGRKKIQITRIQDERNRQVTFTKRKFGLMKKAYELSVLCDCEIALIVFNSTNKLFQYASTDMDKVLLKYTEYNEPHESRTNNDIMEALNRKEGNQGGGNSDDESPGPSTSPVIQITMPAVVNGHSSNNSVASAASASAAAVAAAAAAVAAVEGTSSGAAAAAAALQASNAQRHHNLNLYQNLIFNPNYTRHLNQRNDPLSSTSVAPSSSSSKHLDFPPSTSFAYDTSRLHPIAAADADCDLVPSSRAAADQNIWSSALQQRPVSQPAPSISNSSTNGISNGTSSLLSPNVSSLNGHSVLDLGGPNLPYKLDPNTYVKMEPHSPPEKRPRITTEWRPQQLT.

Residues 1-61 enclose the MADS-box domain; sequence MGRKKIQITR…NKLFQYASTD (61 aa). 4 disordered regions span residues 90-112, 193-217, 258-283, and 312-340; these read RKEG…TSPV, NQRN…LDFP, LQQR…NGTS, and PNTY…QQLT. The span at 200-211 shows a compositional bias: low complexity; sequence SSTSVAPSSSSS. The span at 258–268 shows a compositional bias: polar residues; that stretch reads LQQRPVSQPAP. Low complexity predominate over residues 269–283; sequence SISNSSTNGISNGTS. Basic and acidic residues predominate over residues 318 to 332; it reads MEPHSPPEKRPRITT.

It belongs to the MEF2 family. Interacts with histone deacetylase hda-4 isoform b.

The protein localises to the nucleus. Its function is as follows. Transcription regulator. Binds specifically to the MEF2 element, 5'-[TC]TA[AT][AT][AT][AT]TA[AG]-3' in the regulatory elements of target genes, such as chemoreceptors str-1 and srh-234. Involved in transduction of sensory signals, together with egl-4, kin-29 and hda-4; binding to histone deacetylase hda-4 enables negative modulation of chemoreceptor gene expression in chemosensory neurons. In response to starvation, negatively modulates expression of chemoreceptor srh-234 in ADL sensory neurons, acting in concert with basic helix-loop-helix (bHLH) transcription factors. Plays a role in regulating muscle sensitivity to acetylcholine (ACh) and the magnitude of presynaptic ACh release via a retrograde signal, perhaps by indirectly decreasing Ras-related protein Rab-3 activity. In Caenorhabditis elegans, this protein is MEF2 transcription factor homolog.